A 404-amino-acid polypeptide reads, in one-letter code: Starvation-sensing protein RspA (404 aa).

It belongs to the mandelate racemase/muconate lactonizing enzyme family.

Its function is as follows. Probably involved in the degradation of homoserine lactone (HSL) or of a metabolite of HSL that signals starvation. This Escherichia coli (strain K12) protein is Starvation-sensing protein RspA.